We begin with the raw amino-acid sequence, 220 residues long: Orotate phosphoribosyltransferase (220 aa).

Lys26 is a binding site for 5-phospho-alpha-D-ribose 1-diphosphate. Residue Phe34–Phe35 participates in orotate binding. Residues Tyr72–Lys73, Arg101, Lys102, Lys105, His107, and Asp126–Ser134 each bind 5-phospho-alpha-D-ribose 1-diphosphate. Residues Thr130 and Arg158 each coordinate orotate.

Belongs to the purine/pyrimidine phosphoribosyltransferase family. PyrE subfamily. As to quaternary structure, homodimer. The cofactor is Mg(2+).

The enzyme catalyses orotidine 5'-phosphate + diphosphate = orotate + 5-phospho-alpha-D-ribose 1-diphosphate. It participates in pyrimidine metabolism; UMP biosynthesis via de novo pathway; UMP from orotate: step 1/2. Catalyzes the transfer of a ribosyl phosphate group from 5-phosphoribose 1-diphosphate to orotate, leading to the formation of orotidine monophosphate (OMP). The protein is Orotate phosphoribosyltransferase of Bordetella avium (strain 197N).